We begin with the raw amino-acid sequence, 327 residues long: Phenylalanine--tRNA ligase alpha subunit (327 aa).

Residue glutamate 252 coordinates Mg(2+).

This sequence belongs to the class-II aminoacyl-tRNA synthetase family. Phe-tRNA synthetase alpha subunit type 1 subfamily. Tetramer of two alpha and two beta subunits. It depends on Mg(2+) as a cofactor.

The protein resides in the cytoplasm. It catalyses the reaction tRNA(Phe) + L-phenylalanine + ATP = L-phenylalanyl-tRNA(Phe) + AMP + diphosphate + H(+). This is Phenylalanine--tRNA ligase alpha subunit from Hamiltonella defensa subsp. Acyrthosiphon pisum (strain 5AT).